Reading from the N-terminus, the 395-residue chain is ATP synthase subunit beta, chloroplastic (395 aa).

Residue 72–79 coordinates ATP; the sequence is GGAGVGKT.

Belongs to the ATPase alpha/beta chains family. F-type ATPases have 2 components, CF(1) - the catalytic core - and CF(0) - the membrane proton channel. CF(1) has five subunits: alpha(3), beta(3), gamma(1), delta(1), epsilon(1). CF(0) has four main subunits: a(1), b(1), b'(1) and c(9-12).

Its subcellular location is the plastid. It localises to the chloroplast thylakoid membrane. The enzyme catalyses ATP + H2O + 4 H(+)(in) = ADP + phosphate + 5 H(+)(out). Its function is as follows. Produces ATP from ADP in the presence of a proton gradient across the membrane. The catalytic sites are hosted primarily by the beta subunits. The polypeptide is ATP synthase subunit beta, chloroplastic (Blechnum occidentale (Hammock fern)).